The following is a 236-amino-acid chain: Large ribosomal subunit protein uL2 (236 aa).

Polar residues predominate over residues 1–10; that stretch reads MGHRITTQSR. Disordered stretches follow at residues 1-20 and 202-236; these read MGHRITTQSRGHGGPTYRAP and GGGGHQHAGRPKTVSRGTSPGRKVGHIAARRTGRR. The segment covering 224 to 236 has biased composition (basic residues); sequence KVGHIAARRTGRR.

Belongs to the universal ribosomal protein uL2 family. In terms of assembly, part of the 50S ribosomal subunit. Forms a bridge to the 30S subunit in the 70S ribosome.

One of the primary rRNA binding proteins. Required for association of the 30S and 50S subunits to form the 70S ribosome, for tRNA binding and peptide bond formation. It has been suggested to have peptidyltransferase activity; this is somewhat controversial. Makes several contacts with the 16S rRNA in the 70S ribosome. The polypeptide is Large ribosomal subunit protein uL2 (Methanospirillum hungatei JF-1 (strain ATCC 27890 / DSM 864 / NBRC 100397 / JF-1)).